A 79-amino-acid polypeptide reads, in one-letter code: Succinate dehydrogenase assembly factor 1, mitochondrial (79 aa).

The protein belongs to the complex I LYR family. SDHAF1 subfamily. Interacts with sdh2 within an sdh1-sdh2 subcomplex.

It localises to the mitochondrion matrix. Its function is as follows. Plays an essential role in the assembly of succinate dehydrogenase (SDH), an enzyme complex (also referred to as respiratory complex II) that is a component of both the tricarboxylic acid (TCA) cycle and the mitochondrial electron transport chain, and which couples the oxidation of succinate to fumarate with the reduction of ubiquinone (coenzyme Q) to ubiquinol. Promotes maturation of the iron-sulfur protein subunit sdh2 of the SDH catalytic dimer, protecting it from the deleterious effects of oxidants. May act together with SDHAF3. The protein is Succinate dehydrogenase assembly factor 1, mitochondrial of Schizosaccharomyces pombe (strain 972 / ATCC 24843) (Fission yeast).